Reading from the N-terminus, the 343-residue chain is C-X-C chemokine receptor type 6 (343 aa).

Residues 1 to 33 (MAEYDHYEDDEFFNSFNDSSQKEHQDFLQFSKV) lie on the Extracellular side of the membrane. A glycan (N-linked (GlcNAc...) asparagine) is linked at Asn-17. The chain crosses the membrane as a helical span at residues 34-60 (FLPCMYLVVFVCGLVGNSLVLVISIFY). Topologically, residues 61 to 69 (HKLQSLTDV) are cytoplasmic. Residues 70–90 (FLVNLPLADLVFVCTLPFWAY) form a helical membrane-spanning segment. The Extracellular segment spans residues 91–104 (AGIHEWIFGQVMCK). A disulfide bridge links Cys-103 with Cys-181. Residues 105–126 (TLLGVYTINFYTSMLILTCITV) form a helical membrane-spanning segment. Over 127-144 (DRFIVVVKATKAYNQQAK) the chain is Cytoplasmic. The chain crosses the membrane as a helical span at residues 145–165 (RMTWGKVICLLIWVISLLVSL). At 166 to 188 (PQIIYGNVFNLDKLICRYHDEEI) the chain is on the extracellular side. The chain crosses the membrane as a helical span at residues 189–216 (STVVLATQMTLGFFLPLLTMIVCYSVII). The Cytoplasmic segment spans residues 217–232 (KTLLHAGGFQKHRSLK). A helical membrane pass occupies residues 233–260 (IIFLVMAVFLLTQTPFNLVKLIRSTHWE). Topologically, residues 261-276 (YYAMTSFHYTIIVTEA) are extracellular. The chain crosses the membrane as a helical span at residues 277 to 294 (IAYLRACLNPVLYAFVSL). Over 295-343 (KFRKNFWKLVKDIGCLPYLGVSHQWKSSEDNSKTFSASHNVEATSMFQL) the chain is Cytoplasmic.

Belongs to the G-protein coupled receptor 1 family.

The protein resides in the cell membrane. Functionally, receptor for the C-X-C chemokine CXCL16. Used as a coreceptor by SIVs and by strains of HIV-2 and m-tropic HIV-1. The protein is C-X-C chemokine receptor type 6 (CXCR6) of Cercocebus atys (Sooty mangabey).